A 269-amino-acid chain; its full sequence is MDEPTILLTNDDGIESAGLRAVYDGLSTVGDVTAVAPAEDQSAVGRAISHEVTVHEHELGYAVEGTPSDCVVAGLEALVTDTDLVVAGCNRGANLGAYVLGRSGTVSAAVEATFFDVPAMAVSMYIPVREDAAFADIEANGDSYREAAKATTYLADHAVDAGVFEQCDYLNINAPVAEWGDAQMTVTRPSHLYEMDAEQDGDAVTLHDRIWEHMADGDIPDPEGTDRRAVVDGKVSVSPLTAPHTTEHHEALDAIAETYEPDDGGEAAD.

D11, D12, S42, and N90 together coordinate a divalent metal cation.

Belongs to the SurE nucleotidase family. A divalent metal cation is required as a cofactor.

The protein resides in the cytoplasm. It catalyses the reaction a ribonucleoside 5'-phosphate + H2O = a ribonucleoside + phosphate. Nucleotidase that shows phosphatase activity on nucleoside 5'-monophosphates. The protein is 5'-nucleotidase SurE of Haloarcula marismortui (strain ATCC 43049 / DSM 3752 / JCM 8966 / VKM B-1809) (Halobacterium marismortui).